The primary structure comprises 531 residues: T-complex protein 1 subunit zeta-2 (531 aa).

Belongs to the TCP-1 chaperonin family. In terms of assembly, component of the chaperonin-containing T-complex (TRiC), a heterooligomeric complex of about 850 to 900 kDa that forms two stacked rings, 12 to 16 nm in diameter.

It localises to the cytoplasm. Functionally, component of the chaperonin-containing T-complex (TRiC), a molecular chaperone complex that assists the folding of proteins upon ATP hydrolysis. In Bos taurus (Bovine), this protein is T-complex protein 1 subunit zeta-2 (CCT6B).